The sequence spans 121 residues: Small ribosomal subunit protein uS13 (121 aa).

A disordered region spans residues 92–121 (HKAGLPVRGQKTHSNARTRKGPRLTKIKKR). Basic residues predominate over residues 101–121 (QKTHSNARTRKGPRLTKIKKR).

The protein belongs to the universal ribosomal protein uS13 family. In terms of assembly, part of the 30S ribosomal subunit. Forms a loose heterodimer with protein S19. Forms two bridges to the 50S subunit in the 70S ribosome.

Functionally, located at the top of the head of the 30S subunit, it contacts several helices of the 16S rRNA. In the 70S ribosome it contacts the 23S rRNA (bridge B1a) and protein L5 of the 50S subunit (bridge B1b), connecting the 2 subunits; these bridges are implicated in subunit movement. Contacts the tRNAs in the A and P-sites. This is Small ribosomal subunit protein uS13 from Petrotoga mobilis (strain DSM 10674 / SJ95).